A 387-amino-acid chain; its full sequence is Apoptosis-inducing factor homolog B (387 aa).

Residues 12–16, arginine 47, and aspartate 292 contribute to the FAD site; that span reads GGGYG.

This sequence belongs to the FAD-dependent oxidoreductase family. The cofactor is FAD.

Functionally, putative FAD-dependent oxidoreductase. The protein is Apoptosis-inducing factor homolog B (aifB) of Dictyostelium discoideum (Social amoeba).